The sequence spans 804 residues: Endoplasmin (804 aa).

The signal sequence occupies residues 1–21 (MRALWVLGLCCVLLTFGSVRA). Residues 42–44 (SRT) carry the SRT pseudosubstrate motif motif. An N-linked (GlcNAc...) asparagine glycan is attached at Asn62. Phosphoserine is present on Ser64. N-linked (GlcNAc...) asparagine glycosylation occurs at Asn107. ATP is bound by residues Asn107, Asp149, and Asn162. Lys168 carries the N6-(2-hydroxyisobutyryl)lysine modification. At Ser172 the chain carries Phosphoserine. Position 199 (Phe199) interacts with ATP. N-linked (GlcNAc...) asparagine glycosylation occurs at Asn217. The interval 288–323 (TVEEPAEEEEAAKEDKEESDDEAAVEEEEDEKKPKT) is disordered. Residues 289 to 317 (VEEPAEEEEAAKEDKEESDDEAAVEEEED) show a composition bias toward acidic residues. 2 positions are modified to phosphoserine: Ser306 and Ser403. Position 404 is an N6-succinyllysine (Lys404). The N-linked (GlcNAc...) asparagine glycan is linked to Asn445. Ser447 bears the Phosphoserine mark. An N6-acetyllysine modification is found at Lys479. Asn481 and Asn502 each carry an N-linked (GlcNAc...) asparagine glycan. The residue at position 633 (Lys633) is an N6-succinyllysine. The segment at 750–804 (DPDAKVEEEPEEEPEETTEDTAEDTEQDEEEEMDAGTDEEEQETAEKSTAEKDEL) is disordered. A compositionally biased stretch (acidic residues) spans 757 to 792 (EEPEEEPEETTEDTAEDTEQDEEEEMDAGTDEEEQE). Thr786 is subject to Phosphothreonine. The segment covering 793–804 (TAEKSTAEKDEL) has biased composition (basic and acidic residues). The short motif at 801–804 (KDEL) is the Prevents secretion from ER element.

This sequence belongs to the heat shock protein 90 family. Homodimer; disulfide-linked. Component of an EIF2 complex at least composed of CELF1/CUGBP1, CALR, CALR3, EIF2S1, EIF2S2, HSP90B1 and HSPA5. Part of a large chaperone multiprotein complex comprising DNAJB11, HSP90B1, HSPA5, HYOU, PDIA2, PDIA4, PDIA6, PPIB, SDF2L1, UGGT1 and very small amounts of ERP29, but not, or at very low levels, CALR nor CANX. Interacts with AIMP1; regulates its retention in the endoplasmic reticulum. Hyperglycosylated form interacts with OS9; promoting its degradation by the endoplasmic reticulum associated degradation (ERAD). Interacts with CNPY3. This interaction is disrupted in the presence of ATP. Interacts with TLR4 and TLR9, but not with TLR3. Interacts with MZB1 in a calcium-dependent manner. Interacts with METTL23. Interacts with IL1B; the interaction facilitates cargo translocation into the ERGIC. Interacts with EIF2AK3. Post-translationally, phosphorylated by CK2. In terms of processing, N-glycosylated cotranslationally at Asn-217 by STT3A-containing OST-A complex: this glycosylation is constitutive. In response to various stress, 5 additional facultative sites (Asn-62, Asn-107, Asn-445, Asn-481 and Asn-502) can be glycosylated post-translationally by STT3B-containing OST-B complex, leading to a hyperglycosylated form that is degraded by the ER-associated degradation (ERAD) pathway. In normal conditions, the OST-A complex together with CCDC134 prevent glycosylation at facultative sites during protein folding, thereby preventing hyperglycosylation. Mechanistically, nascent HSP90B1 is tethered during translation to a specialized CCDC134-containing translocon that forms a microenvironment for its folding, in which STT3A associates with the SRT pseudosubstrate motif, and prevents access to facultative glycosylation sites until folding is completed, rendering its facultative sites inaccessible to the OST-B complex.

It is found in the endoplasmic reticulum lumen. The protein resides in the sarcoplasmic reticulum lumen. Its subcellular location is the melanosome. It carries out the reaction ATP + H2O = ADP + phosphate + H(+). Its function is as follows. ATP-dependent chaperone involved in the processing of proteins in the endoplasmic reticulum, regulating their transport. Together with MESD, acts as a modulator of the Wnt pathway by promoting the folding of LRP6, a coreceptor of the canonical Wnt pathway. When associated with CNPY3, required for proper folding of Toll-like receptors. Promotes folding and trafficking of TLR4 to the cell surface. May participate in the unfolding of cytosolic leaderless cargos (lacking the secretion signal sequence) such as the interleukin 1/IL-1 to facilitate their translocation into the ERGIC (endoplasmic reticulum-Golgi intermediate compartment) and secretion; the translocation process is mediated by the cargo receptor TMED10. This is Endoplasmin (HSP90B1) from Bos taurus (Bovine).